Reading from the N-terminus, the 239-residue chain is Sensory rhodopsin-1 (239 aa).

The Extracellular portion of the chain corresponds to Met-1–Ala-3. Residues Val-4–Leu-25 traverse the membrane as a helical segment. Topologically, residues Tyr-26 to His-34 are cytoplasmic. The helical transmembrane segment at Gln-35–Ala-56 threads the bilayer. Over Tyr-57–Val-70 the chain is Extracellular. Residues Gly-71–Ala-92 form a helical membrane-spanning segment. The Cytoplasmic portion of the chain corresponds to Gly-93 to Ser-95. A helical membrane pass occupies residues Arg-96–Val-118. The Extracellular portion of the chain corresponds to Thr-119–Thr-122. The helical transmembrane segment at Leu-123–Val-150 threads the bilayer. Residues Pro-151 to Val-153 are Cytoplasmic-facing. Residues Pro-154–Gly-181 form a helical membrane-spanning segment. Residues Pro-182 to Thr-189 lie on the Extracellular side of the membrane. The helical transmembrane segment at Ala-190–Ser-222 threads the bilayer. Lys-205 is subject to N6-(retinylidene)lysine. Over Glu-223–Asp-239 the chain is Cytoplasmic.

Belongs to the archaeal/bacterial/fungal opsin family. In terms of assembly, interacts with HTR-I.

It localises to the cell membrane. Functionally, involved in the control of phototaxis. Mediates both photoattractant (in the orange light) and photophobic (in the near UV light) responses. The signal is then transmitted to the sensory rhodopsin I transducer (HTR-I). The sequence is that of Sensory rhodopsin-1 (sopI) from Halobacterium salinarum (strain ATCC 29341 / DSM 671 / R1).